Here is a 355-residue protein sequence, read N- to C-terminus: MACLTDLVNLNLSDTTEKIIAEYIWIGGSGMDLRSKARTLPGPVTDPSKLPKWNYDGSSTGQAPGEDSEVILYPQAIFKDPFRRGNNILVMCDCYTPAGEPIPTNKRYSAAKIFSSPEVAAEEPWYGIEQEYTLLQKDTNWPLGWPIGGFPGPQGPYYCGIGAEKSFGRDIVDAHYKACLYAGINISGINGEVMPGQWEFQVGPSVGISSGDQVWVARYILERITEIAGVVVTFDPKPIPGDWNGAGAHTNYSTESMRKEGGYEVIKAAIEKLKLRHKEHIAAYGEGNERRLTGRHETADINTFSWGVANRGASVAVGQTEQNGKGYFEDRRPASNMDPYVVTSMIAETTIVWKP.

The GS beta-grasp domain occupies 19–99 (IIAEYIWIGG…VMCDCYTPAG (81 aa)). The tract at residues 37 to 66 (ARTLPGPVTDPSKLPKWNYDGSSTGQAPGE) is disordered. The region spanning 106 to 355 (KRYSAAKIFS…IAETTIVWKP (250 aa)) is the GS catalytic domain.

It belongs to the glutamine synthetase family. Homooctamer. As to expression, found in all the tissues examined with higher expression found in tissues of the root, stem and seedling shoot.

It localises to the cytoplasm. The enzyme catalyses L-glutamate + NH4(+) + ATP = L-glutamine + ADP + phosphate + H(+). Plays a role in the flow of nitrogen into nitrogenous organic compounds. The protein is Glutamine synthetase root isozyme 4 (GLN5) of Zea mays (Maize).